Reading from the N-terminus, the 162-residue chain is Phospholipase A and acyltransferase 3 (162 aa).

At 1 to 133 the chain is on the cytoplasmic side; the sequence is MRAPIPEPKP…VARSDQVRDV (133 aa). One can recognise an LRAT domain in the interval 13 to 129; it reads LIEIFRPFYR…LRYGVARSDQ (117 aa). Catalysis depends on residues H23 and H35. C113 acts as the Acyl-thioester intermediate in catalysis. A helical transmembrane segment spans residues 134-154; the sequence is IIAASAAGMGLAAMSLIGVMF. The Lumenal segment spans residues 155 to 162; the sequence is SRNKRQKQ.

The protein belongs to the H-rev107 family. Interacts with PPP2R1A; this interaction might decrease PP2A activity.

Its subcellular location is the cell membrane. It is found in the cytoplasm. It localises to the cytosol. The protein localises to the perinuclear region. The protein resides in the peroxisome membrane. Its subcellular location is the mitochondrion membrane. It is found in the nucleus envelope. It localises to the lysosome membrane. The protein localises to the endoplasmic reticulum membrane. It catalyses the reaction a 1,2-diacyl-sn-glycero-3-phosphocholine + H2O = a 1-acyl-sn-glycero-3-phosphocholine + a fatty acid + H(+). The catalysed reaction is a 1,2-diacyl-sn-glycero-3-phosphocholine + H2O = a 2-acyl-sn-glycero-3-phosphocholine + a fatty acid + H(+). The enzyme catalyses 1,2-dihexadecanoyl-sn-glycero-3-phosphocholine + H2O = 1-hexadecanoyl-sn-glycero-3-phosphocholine + hexadecanoate + H(+). It carries out the reaction 1,2-dihexadecanoyl-sn-glycero-3-phosphocholine + H2O = 2-hexadecanoyl-sn-glycero-3-phosphocholine + hexadecanoate + H(+). It catalyses the reaction 1-hexadecanoyl-2-(9Z-octadecenoyl)-sn-glycero-3-phosphocholine + H2O = 2-(9Z-octadecenoyl)-sn-glycero-3-phosphocholine + hexadecanoate + H(+). The catalysed reaction is 1-hexadecanoyl-2-(9Z-octadecenoyl)-sn-glycero-3-phosphocholine + H2O = 1-hexadecanoyl-sn-glycero-3-phosphocholine + (9Z)-octadecenoate + H(+). The enzyme catalyses 1-hexadecanoyl-2-(5Z,8Z,11Z,14Z-eicosatetraenoyl)-sn-glycero-3-phosphocholine + H2O = 1-hexadecanoyl-sn-glycero-3-phosphocholine + (5Z,8Z,11Z,14Z)-eicosatetraenoate + H(+). It carries out the reaction 1-hexadecanoyl-2-(5Z,8Z,11Z,14Z-eicosatetraenoyl)-sn-glycero-3-phosphocholine + H2O = 2-(5Z,8Z,11Z,14Z)-eicosatetraenoyl-sn-glycero-3-phosphocholine + hexadecanoate + H(+). It catalyses the reaction 1-hexadecanoyl-2-(9Z,12Z-octadecadienoyl)-sn-glycero-3-phosphoethanolamine + H2O = 1-hexadecanoyl-sn-glycero-3-phosphoethanolamine + (9Z,12Z)-octadecadienoate + H(+). The catalysed reaction is 1-hexadecanoyl-2-(9Z,12Z-octadecadienoyl)-sn-glycero-3-phosphoethanolamine + H2O = 2-(9Z,12Z)-octadecadienoyl-sn-glycero-3-phosphoethanolamine + hexadecanoate + H(+). The enzyme catalyses 1-hexadecanoyl-2-(5Z,8Z,11Z,14Z-eicosatetraenoyl)-sn-glycero-3-phosphoethanolamine + H2O = 1-hexadecanoyl-sn-glycero-3-phosphoethanolamine + (5Z,8Z,11Z,14Z)-eicosatetraenoate + H(+). It carries out the reaction 1-hexadecanoyl-2-(5Z,8Z,11Z,14Z-eicosatetraenoyl)-sn-glycero-3-phosphoethanolamine + H2O = 2-(5Z,8Z,11Z,14Z)-eicosatetraenoyl-sn-glycero-3-phosphoethanolamine + hexadecanoate + H(+). It catalyses the reaction 1-hexanoyl-2-acyl-sn-glycero-3-phosphocholine + H2O = hexanoate + a 2-acyl-sn-glycero-3-phosphocholine + H(+). The catalysed reaction is 1-hexanoyl-2-acyl-sn-glycero-3-phosphocholine + H2O = 1-hexanoyl-sn-glycero-3-phosphocholine + a fatty acid + H(+). The enzyme catalyses 1,2-diheptadecanoyl-sn-glycero-3-phosphoethanolamine + 1-(9Z-octadecenoyl)-2-hexadecanoyl-sn-glycero-3-phosphocholine = 1,2-diheptadecanoyl-sn-glycero-3-phospho-N-hexadecanoyl-ethanolamine + 1-(9Z-octadecenoyl)-sn-glycero-3-phosphocholine + H(+). It carries out the reaction 1,2-diheptadecanoyl-sn-glycero-3-phosphoethanolamine + 1-(9Z-octadecenoyl)-2-hexadecanoyl-sn-glycero-3-phosphocholine = 1,2-diheptadecanoyl-sn-glycero-3-phospho-N-(9Z-octadecenoyl)-ethanolamine + 2-hexadecanoyl-sn-glycero-3-phosphocholine + H(+). It catalyses the reaction 1,2-dihexanoyl-sn-glycero-3-phosphoethanolamine + 2-heptanoyl-sn-glycero-3-phosphocholine = hexanoyl-sn-glycero-3-phosphoethanolamine + 1-hexanoyl-2-heptanoyl-sn-glycero-3-phosphocholine. The catalysed reaction is 1-hexadecanoyl-2-octadecanoyl-sn-glycero-3-phosphocholine + H2O = octadecanoate + 1-hexadecanoyl-sn-glycero-3-phosphocholine + H(+). The enzyme catalyses 1-hexadecanoyl-2-octadecanoyl-sn-glycero-3-phosphocholine + H2O = 2-octadecanoyl-sn-glycero-3-phosphocholine + hexadecanoate + H(+). It carries out the reaction 1-octadecanoyl-2-hexadecanoyl-sn-glycero-3-phosphocholine + H2O = 1-octadecanoyl-sn-glycero-3-phosphocholine + hexadecanoate + H(+). It catalyses the reaction 1-octadecanoyl-2-hexadecanoyl-sn-glycero-3-phosphocholine + H2O = 2-hexadecanoyl-sn-glycero-3-phosphocholine + octadecanoate + H(+). The catalysed reaction is 1-hexadecanoyl-2-(9Z,12Z-octadecadienoyl)-sn-glycero-3-phosphocholine + H2O = (9Z,12Z)-octadecadienoate + 1-hexadecanoyl-sn-glycero-3-phosphocholine + H(+). The enzyme catalyses 1-hexadecanoyl-2-(9Z,12Z-octadecadienoyl)-sn-glycero-3-phosphocholine + H2O = 2-(9Z,12Z-octadecadienoyl)-sn-glycero-3-phosphocholine + hexadecanoate + H(+). It carries out the reaction 1,2-di-(9Z-octadecenoyl)-sn-glycero-3-phosphocholine + H2O = 2-(9Z-octadecenoyl)-sn-glycero-3-phosphocholine + (9Z)-octadecenoate + H(+). It catalyses the reaction 1,2-dihexadecanoyl-sn-glycero-3-phosphocholine + H2O = hexadecanoyl-sn-glycero-3-phosphocholine + hexadecanoate + H(+). The catalysed reaction is 1,2-di-(9Z-octadecenoyl)-sn-glycero-3-phosphocholine + H2O = 1-(9Z-octadecenoyl)-sn-glycero-3-phosphocholine + (9Z)-octadecenoate + H(+). The enzyme catalyses 1,2-di-(9Z-octadecenoyl)-sn-glycero-3-phosphoethanolamine + 1,2-dihexadecanoyl-sn-glycero-3-phosphocholine = hexadecanoyl-sn-glycero-3-phosphocholine + N-hexadecanoyl-1,2-di-(9Z-octadecenoyl)-sn-glycero-3-phosphoethanolamine + H(+). It carries out the reaction 1,2-di-(9Z,12Z-octadecadienoyl)-sn-glycero-3-phosphocholine + H2O = 1-(9Z,12Z)-octadecadienoyl-sn-glycero-3-phosphocholine + (9Z,12Z)-octadecadienoate + H(+). Exhibits both phospholipase A1/2 and acyltransferase activities. Shows phospholipase A1 (PLA1) and A2 (PLA2), catalyzing the calcium-independent release of fatty acids from the sn-1 or sn-2 position of glycerophospholipids. For most substrates, PLA1 activity is much higher than PLA2 activity. Shows O-acyltransferase activity, catalyzing the transfer of a fatty acyl group from glycerophospholipid to the hydroxyl group of lysophospholipid. Shows N-acyltransferase activity, catalyzing the calcium-independent transfer of a fatty acyl group at the sn-1 position of phosphatidylcholine (PC) and other glycerophospholipids to the primary amine of phosphatidylethanolamine (PE), forming N-acylphosphatidylethanolamine (NAPE), which serves as precursor for N-acylethanolamines (NAEs). Exhibits high N-acyltransferase activity and low phospholipase A1/2 activity. Required for complete organelle rupture and degradation that occur during eye lens terminal differentiation, when fiber cells that compose the lens degrade all membrane-bound organelles in order to provide lens with transparency to allow the passage of light. Organelle membrane degradation is probably catalyzed by the phospholipase activity. Plays a role in phospholipid metabolism and adipogenesis. The chain is Phospholipase A and acyltransferase 3 from Pongo abelii (Sumatran orangutan).